The sequence spans 988 residues: RecQ-like DNA helicase blm-1 (988 aa).

The tract at residues C46–L119 is disordered. Repeat copies occupy residues D121–E129 and E130–D138. The 2 X 9 AA tandem repeats of [DE]-P-P-I-V-D-L-D-[ED] stretch occupies residues D121–D138. A disordered region spans residues T148 to T185. Residues A158 to E174 show a composition bias toward acidic residues. Residues F248–Q252 and G272–S276 contribute to the ATP site. Positions I256 to K433 constitute a Helicase ATP-binding domain. Residues D375 to H378 carry the DEAH box motif. Residues N458 to L603 form the Helicase C-terminal domain. Residues S478–K480 are 3' overhang DNA-binding. R562 serves as a coordination point for ATP. Residues R580–R583 form a 3' overhang DNA-binding region. 4 residues coordinate Zn(2+): C615, C633, C640, and C643. 3' overhang DNA-binding stretches follow at residues T676–K678, A687–K691, and Y736–A742. Residues G807 to R888 form the HRDC domain. The disordered stretch occupies residues G930–M988. The Nuclear localization signal signature appears at K939–P955.

Belongs to the helicase family. RecQ subfamily. Monomer. Homodimer (via N-terminus). Homotetramer (via N-terminus); dimer of dimers. Homohexamer (via N-terminus). Self-association negatively regulates DNA unwinding amplitude and rate. Oligomer forms dissociate into monomer in presence of ATP. Component of the BTR double Holliday Junction dissolution complex composed of at least him-6, top-3, rmh-1 and rmif-2, which is involved in double strand break repair in the germline. May interact with rmh-1; the interaction is required for mutual stability and localization at nuclear foci. Forms a complex composed of cdc-48.1, him-6 and crp-1; within the complex, interacts with cdc-48.1. Zn(2+) serves as cofactor.

It localises to the nucleus. The protein resides in the chromosome. It carries out the reaction Couples ATP hydrolysis with the unwinding of duplex DNA by translocating in the 3'-5' direction.. The catalysed reaction is ATP + H2O = ADP + phosphate + H(+). Functionally, component of the BTR double Holliday Junction dissolution complex, which is involved in homologous recombination during meiotic double strand break in the germline. Stabilizes and positively regulates the localization of the BTR double Holliday Junction dissolution complex component rmh-1 at nuclear foci during meiotic recombination. Participates in DNA replication and repair. Exhibits a magnesium-dependent ATP-dependent DNA-helicase activity that unwinds single- and double-stranded DNA in a 3'-5' direction. Negatively regulates sister chromatid exchange (SCE). In terms of biological role, ATP-dependent DNA helicase that unwinds single- and double-stranded DNA in a 3'-5' direction. Participates in DNA replication and repair. Negatively regulates sister chromatid exchange (SCE). Stimulates DNA 4-way junction branch migration and DNA Holliday junction dissolution. Binds single-stranded DNA (ssDNA), forked duplex DNA and DNA Holliday junction. In Caenorhabditis elegans, this protein is RecQ-like DNA helicase blm-1.